The primary structure comprises 720 residues: Casein kinase II subunit alpha'-interacting protein (720 aa).

The segment covering 227–249 (LSSPSFTNRLQRNSFPPTSSSLE) has biased composition (polar residues). Disordered stretches follow at residues 227 to 250 (LSSP…SLEF), 264 to 303 (KPLK…SRRL), 333 to 366 (QNTA…SPKP), 602 to 640 (TQVQ…VDPT), and 678 to 698 (LRQS…KCLK). Over residues 608–626 (SSSSSSSCSSVSSSSSASS) the composition is skewed to low complexity. Over residues 630-640 (PSPPTPWVDPT) the composition is skewed to pro residues. Residues 687 to 698 (KPVRSHNSKCLK) are compositionally biased toward basic residues.

In terms of assembly, interacts (via C-terminus) with CSNK2A2. In terms of processing, phosphorylated by CK2 (casein kinase II), specifically by complexes containing catalytic subunit CSNK2A2. As to expression, expressed exclusively in testis (at protein level). Within testis, expressed mainly in the intermediate compartment of the seminiferous tubules with weaker expression in the basal and adluminal compartments.

Its subcellular location is the nucleus. May play a role in chromatin regulation of male germ cells. The protein is Casein kinase II subunit alpha'-interacting protein of Mus musculus (Mouse).